The sequence spans 122 residues: Urease subunit beta (122 aa).

The interval 102 to 122 (DGGTAVAGEPRPGIAAERDHQ) is disordered.

The protein belongs to the urease beta subunit family. Heterotrimer of UreA (gamma), UreB (beta) and UreC (alpha) subunits. Three heterotrimers associate to form the active enzyme.

It localises to the cytoplasm. It carries out the reaction urea + 2 H2O + H(+) = hydrogencarbonate + 2 NH4(+). The protein operates within nitrogen metabolism; urea degradation; CO(2) and NH(3) from urea (urease route): step 1/1. The sequence is that of Urease subunit beta from Paenarthrobacter aurescens (strain TC1).